A 249-amino-acid chain; its full sequence is UDP-2,3-diacylglucosamine hydrolase (249 aa).

The Mn(2+) site is built by Asp-7, His-9, Asp-40, Asn-78, and His-113. 78-79 (NR) contacts substrate. Positions 121, 159, 163, 166, and 194 each coordinate substrate. 2 residues coordinate Mn(2+): His-194 and His-196.

This sequence belongs to the LpxH family. The cofactor is Mn(2+).

Its subcellular location is the cell inner membrane. It catalyses the reaction UDP-2-N,3-O-bis[(3R)-3-hydroxytetradecanoyl]-alpha-D-glucosamine + H2O = 2-N,3-O-bis[(3R)-3-hydroxytetradecanoyl]-alpha-D-glucosaminyl 1-phosphate + UMP + 2 H(+). It participates in glycolipid biosynthesis; lipid IV(A) biosynthesis; lipid IV(A) from (3R)-3-hydroxytetradecanoyl-[acyl-carrier-protein] and UDP-N-acetyl-alpha-D-glucosamine: step 4/6. Its function is as follows. Hydrolyzes the pyrophosphate bond of UDP-2,3-diacylglucosamine to yield 2,3-diacylglucosamine 1-phosphate (lipid X) and UMP by catalyzing the attack of water at the alpha-P atom. Involved in the biosynthesis of lipid A, a phosphorylated glycolipid that anchors the lipopolysaccharide to the outer membrane of the cell. The polypeptide is UDP-2,3-diacylglucosamine hydrolase (Pseudomonas fluorescens (strain SBW25)).